The chain runs to 349 residues: MSVGIVSYGAYIPKFRIKVEDIARVWGDDADILSAGLMVYEKSVPDLDEDTATIAVEAARSAVLRNNIDAKRIGAVYTGSESHPYAVKPTSTIVAEAIEATPVLTAADFEFACKAGTAAMQACMGLVGSGMVDLGMAIGADVSQGAPGDALEYTAAAGGVSYIIGNKESEMIAVIEDTFSFTTDTPDFWRREGMPYPEHGGRFTGEPGYFKHVTGAANGLMEKMGTKPSDYDYAVFHQPNGKFPSRVAKMLGFTKEQIKPGLVVPWLGNTYSGSCMMGIAATLDQAKPGDRIFATAFGSGAGGDAFSFRVTDKIDEVRDAAPKVLDLLKDPVYMDYAMYAKHKGKIRLA.

(3S)-3-hydroxy-3-methylglutaryl-CoA contacts are provided by Asp29 and Ala30. Glu81 (proton donor/acceptor) is an active-site residue. Residues Cys113 and Thr154 each coordinate (3S)-3-hydroxy-3-methylglutaryl-CoA. Cys113 (acyl-thioester intermediate) is an active-site residue. A CoA-binding site is contributed by Arg202. Residues Thr204 and His237 each contribute to the (3S)-3-hydroxy-3-methylglutaryl-CoA site. His237 serves as the catalytic Proton donor/acceptor. Lys242 provides a ligand contact to CoA. 3 residues coordinate (3S)-3-hydroxy-3-methylglutaryl-CoA: Arg246, Asn269, and Ser299.

This sequence belongs to the thiolase-like superfamily. Archaeal HMG-CoA synthase family. In terms of assembly, interacts with acetoacetyl-CoA thiolase that catalyzes the precedent step in the pathway and with a DUF35 protein. The acetoacetyl-CoA thiolase/HMG-CoA synthase complex channels the intermediate via a fused CoA-binding site, which allows for efficient coupling of the endergonic thiolase reaction with the exergonic HMGCS reaction.

It catalyses the reaction acetoacetyl-CoA + acetyl-CoA + H2O = (3S)-3-hydroxy-3-methylglutaryl-CoA + CoA + H(+). It functions in the pathway metabolic intermediate biosynthesis; (R)-mevalonate biosynthesis; (R)-mevalonate from acetyl-CoA: step 2/3. Catalyzes the condensation of acetyl-CoA with acetoacetyl-CoA to form 3-hydroxy-3-methylglutaryl-CoA (HMG-CoA). Functions in the mevalonate (MVA) pathway leading to isopentenyl diphosphate (IPP), a key precursor for the biosynthesis of isoprenoid compounds that are building blocks of archaeal membrane lipids. The chain is Hydroxymethylglutaryl-CoA synthase from Methanococcoides burtonii (strain DSM 6242 / NBRC 107633 / OCM 468 / ACE-M).